Consider the following 419-residue polypeptide: Gamma-glutamyl phosphate reductase (419 aa).

The protein belongs to the gamma-glutamyl phosphate reductase family.

The protein localises to the cytoplasm. The enzyme catalyses L-glutamate 5-semialdehyde + phosphate + NADP(+) = L-glutamyl 5-phosphate + NADPH + H(+). It participates in amino-acid biosynthesis; L-proline biosynthesis; L-glutamate 5-semialdehyde from L-glutamate: step 2/2. Its function is as follows. Catalyzes the NADPH-dependent reduction of L-glutamate 5-phosphate into L-glutamate 5-semialdehyde and phosphate. The product spontaneously undergoes cyclization to form 1-pyrroline-5-carboxylate. This chain is Gamma-glutamyl phosphate reductase, found in Solidesulfovibrio magneticus (strain ATCC 700980 / DSM 13731 / RS-1) (Desulfovibrio magneticus).